The primary structure comprises 256 residues: MPRSCYSRSGTLLLALLLQISMEVRGWCLESSQCQDLTTERHLLECLRACKPDLSAETPVFPGGADEQTPTESPRKYVTGHFRWGRFGRGNSSGASQKREEEAAAADPGFHGDGVEPGLREDKRSYSMEHFRWGKPVGKKRRPVKVYANGAEEESAEAFPLEFKRELTGERPAAAPGPDGLGFGLVAEAEAEAAAAEKKDAAEKKDDGSYRMEHFRWGTPRKGKRYGGFMTSEKSQTPLVTLFKNAIVKNAHKKGQ.

A signal peptide spans 1-26 (MPRSCYSRSGTLLLALLLQISMEVRG). A disulfide bond links Cys-28 and Cys-50. O-linked (GalNAc...) threonine glycosylation occurs at Thr-71. Phe-87 carries the post-translational modification Phenylalanine amide. Positions 88-120 (GRGNSSGASQKREEEAAAADPGFHGDGVEPGLR) are disordered. The N-linked (GlcNAc...) asparagine glycan is linked to Asn-91. The propeptide occupies 100-122 (EEEAAAADPGFHGDGVEPGLRED). Position 125 is an N-acetylserine; in Corticotropin (Ser-125). Val-137 bears the Valine amide mark. Phosphoserine is present on Ser-155.

This sequence belongs to the POMC family. Specific enzymatic cleavages at paired basic residues yield the different active peptides. ACTH and MSH are produced by the pituitary gland.

The protein resides in the secreted. ACTH stimulates the adrenal glands to release cortisol. Its function is as follows. MSH (melanocyte-stimulating hormone) increases the pigmentation of skin by increasing melanin production in melanocytes. In terms of biological role, beta-endorphin and Met-enkephalin are endogenous opiates. Functionally, stimulates the adrenal glands to release cortisol. Anorexigenic peptide. Increases the pigmentation of skin by increasing melanin production in melanocytes. Its function is as follows. Increases the pigmentation of skin by increasing melanin production in melanocytes. In terms of biological role, endogenous orexigenic opiate. Functionally, endogenous opiate. In Cavia porcellus (Guinea pig), this protein is Pro-opiomelanocortin (POMC).